Reading from the N-terminus, the 610-residue chain is DNA mismatch repair protein MutL (610 aa).

The protein belongs to the DNA mismatch repair MutL/HexB family.

In terms of biological role, this protein is involved in the repair of mismatches in DNA. It is required for dam-dependent methyl-directed DNA mismatch repair. May act as a 'molecular matchmaker', a protein that promotes the formation of a stable complex between two or more DNA-binding proteins in an ATP-dependent manner without itself being part of a final effector complex. The polypeptide is DNA mismatch repair protein MutL (Rickettsia peacockii (strain Rustic)).